Consider the following 146-residue polypeptide: Hemoglobin subunit beta-1 (146 aa).

One can recognise a Globin domain in the interval 2-146 (EWTDQERATI…VVSALGKQYH (145 aa)). Residues His63 and His92 each coordinate heme b.

It belongs to the globin family. Hb1 is a heterotetramer of two alpha-1 chains and two beta-1 chains. Hb2 is a heterotetramer of two alpha-2 chains and two beta-1 chains. HbC is a heterotetramer of two alpha-1 chains and two beta-2 chains. Red blood cells.

Involved in oxygen transport from gills to the various peripheral tissues. This Eleginops maclovinus (Patagonian blennie) protein is Hemoglobin subunit beta-1.